A 419-amino-acid chain; its full sequence is MKNQLRGPPVRAHMSTSGAAAAGGTRAGSEPGAGSGSSAGIGAGATTGAGAMPCKSAEWLQEELEARGGASLLLLDCRPHELFESSHIETAINLAIPGLMLRRLRKGNLPIRSIIPNHADKERFATRCKAATVLLYDEATAEWQPEPGAPASVLGLLLQKLRDDGCQAYYLQGGFNKFQTEYSEHCETNVDSSSSPSGSPPTSVLGLGGLRISSDCSDGESDRELPSSATESDGSPVPSSQPAFPVQILPYLYLGCAKDSTNLDVLGKYGIKYILNVTPNLPNAFEHGGEFTYKQIPISDHWSQNLSQFFPEAISFIDEARSKKCGVLVHCLAGISRSVTVTVAYLMQKMNLSLNDAYDFVKRKKSNISPNFNFMGQLLDFERTLGLSSPCDNHTPSEQLYFSTPTNHNLFPINTLEST.

The segment at 1–41 (MKNQLRGPPVRAHMSTSGAAAAGGTRAGSEPGAGSGSSAGI) is disordered. The span at 15–30 (STSGAAAAGGTRAGSE) shows a compositional bias: low complexity. Over residues 31–41 (PGAGSGSSAGI) the composition is skewed to gly residues. The Rhodanese domain occupies 68-187 (GGASLLLLDC…FQTEYSEHCE (120 aa)). The disordered stretch occupies residues 216 to 240 (CSDGESDRELPSSATESDGSPVPSS). Residues 227 to 240 (SSATESDGSPVPSS) show a composition bias toward polar residues. Positions 244-387 (FPVQILPYLY…LLDFERTLGL (144 aa)) constitute a Tyrosine-protein phosphatase domain. The Phosphocysteine intermediate role is filled by Cys-331. Residue 331 to 337 (CLAGISR) coordinates substrate.

It belongs to the protein-tyrosine phosphatase family. Non-receptor class dual specificity subfamily. Interacts with MAPK1/ERK2; the interaction enhances DUSP7 phosphatase activity.

It is found in the cytoplasm. It carries out the reaction O-phospho-L-tyrosyl-[protein] + H2O = L-tyrosyl-[protein] + phosphate. It catalyses the reaction O-phospho-L-seryl-[protein] + H2O = L-seryl-[protein] + phosphate. The catalysed reaction is O-phospho-L-threonyl-[protein] + H2O = L-threonyl-[protein] + phosphate. Its activity is regulated as follows. Strongly inhibited by sodium orthovanadate. Dual specificity protein phosphatase. Shows high activity towards MAPK1/ERK2. Also has lower activity towards MAPK14 and MAPK8. In arrested oocytes, plays a role in meiotic resumption. Promotes nuclear envelope breakdown and activation of the CDK1/Cyclin-B complex in oocytes, probably by dephosphorylating and inactivating the conventional protein kinase C (cPKC) isozyme PRKCB. May also inactivate PRKCA and/or PRKCG. Also important in oocytes for normal chromosome alignment on the metaphase plate and progression to anaphase, where it might regulate activity of the spindle-assembly checkpoint (SAC) complex. This Rattus norvegicus (Rat) protein is Dual specificity protein phosphatase 7.